We begin with the raw amino-acid sequence, 129 residues long: Small ribosomal subunit protein uS8 (129 aa).

This sequence belongs to the universal ribosomal protein uS8 family. As to quaternary structure, part of the 30S ribosomal subunit.

In terms of biological role, one of the primary rRNA binding proteins, it binds directly to 16S rRNA central domain where it helps coordinate assembly of the platform of the 30S subunit. This Picrophilus torridus (strain ATCC 700027 / DSM 9790 / JCM 10055 / NBRC 100828 / KAW 2/3) protein is Small ribosomal subunit protein uS8.